The following is a 276-amino-acid chain: Diaminopimelate epimerase (276 aa).

Substrate-binding residues include asparagine 13, glutamine 46, and asparagine 66. The active-site Proton donor is cysteine 75. Substrate-binding positions include 76–77 (GN), asparagine 159, asparagine 192, and 210–211 (ER). The active-site Proton acceptor is the cysteine 219. 220–221 (GT) is a substrate binding site.

Belongs to the diaminopimelate epimerase family. As to quaternary structure, homodimer.

The protein localises to the cytoplasm. It carries out the reaction (2S,6S)-2,6-diaminopimelate = meso-2,6-diaminopimelate. It participates in amino-acid biosynthesis; L-lysine biosynthesis via DAP pathway; DL-2,6-diaminopimelate from LL-2,6-diaminopimelate: step 1/1. Catalyzes the stereoinversion of LL-2,6-diaminopimelate (L,L-DAP) to meso-diaminopimelate (meso-DAP), a precursor of L-lysine and an essential component of the bacterial peptidoglycan. This chain is Diaminopimelate epimerase, found in Pseudoalteromonas translucida (strain TAC 125).